The sequence spans 234 residues: MEQQQGAEDVPVIYLHEIKRQYLQGEVPLTILDGAKLALWAGQSVALVAPSGSGKSTLLHIAGLLEAPDSGEVYVNGAPTSQLPDIERTQLRRTDIGFVYQSHRLLPEFSALENVMLPQMIRGLKKSESVKRAKEILGYLGLGDRITHRPAELSGGEQQRVAIARAVANAPRVLFADEPTGNLDPHTADHVFQALMQLVKATRVSMLIATHNMELAGRMDRRVSLSDGQVVELE.

Positions 13–233 constitute an ABC transporter domain; it reads IYLHEIKRQY…SLSDGQVVEL (221 aa). 49–56 is a binding site for ATP; sequence APSGSGKS.

Belongs to the ABC transporter superfamily. Lipoprotein translocase (TC 3.A.1.125) family. As to quaternary structure, the complex is composed of two ATP-binding proteins (LolD) and two transmembrane proteins (LolC and LolE).

It localises to the cell inner membrane. Part of the ABC transporter complex LolCDE involved in the translocation of mature outer membrane-directed lipoproteins, from the inner membrane to the periplasmic chaperone, LolA. Responsible for the formation of the LolA-lipoprotein complex in an ATP-dependent manner. This chain is Lipoprotein-releasing system ATP-binding protein LolD, found in Bradyrhizobium diazoefficiens (strain JCM 10833 / BCRC 13528 / IAM 13628 / NBRC 14792 / USDA 110).